A 34-amino-acid polypeptide reads, in one-letter code: Photosystem II reaction center protein M (34 aa).

The chain crosses the membrane as a helical span at residues 5 to 25 (ILAFIATALFILIPTAFLLIL).

This sequence belongs to the PsbM family. In terms of assembly, PSII is composed of 1 copy each of membrane proteins PsbA, PsbB, PsbC, PsbD, PsbE, PsbF, PsbH, PsbI, PsbJ, PsbK, PsbL, PsbM, PsbT, PsbX, PsbY, PsbZ, Psb30/Ycf12, at least 3 peripheral proteins of the oxygen-evolving complex and a large number of cofactors. It forms dimeric complexes.

The protein localises to the plastid. It is found in the chloroplast thylakoid membrane. In terms of biological role, one of the components of the core complex of photosystem II (PSII). PSII is a light-driven water:plastoquinone oxidoreductase that uses light energy to abstract electrons from H(2)O, generating O(2) and a proton gradient subsequently used for ATP formation. It consists of a core antenna complex that captures photons, and an electron transfer chain that converts photonic excitation into a charge separation. This subunit is found at the monomer-monomer interface. This Anthoceros angustus (Hornwort) protein is Photosystem II reaction center protein M.